The following is an 84-amino-acid chain: uncharacterized protein (84 aa).

The region spanning 7 to 62 is the HTH cro/C1-type domain; sequence IDVMLAKRKMSVTELSERVGITMANLSILKNGKAKAIRLSTLEAICKALECQPGDI. The segment at residues 18–37 is a DNA-binding region (H-T-H motif); that stretch reads VTELSERVGITMANLSILKN.

This is an uncharacterized protein from Bacillus subtilis (strain 168).